We begin with the raw amino-acid sequence, 344 residues long: Transcription factor HRS1 (344 aa).

The interval 88–184 (IKDSSTSNEE…DGGGGRKQRR (97 aa)) is disordered. Acidic residues predominate over residues 95 to 104 (NEEEDEEFDD). Composition is skewed to basic and acidic residues over residues 105 to 124 (EHGN…KSDW) and 138 to 178 (LLPK…DGGG). Residues 178-238 (GGRKQRRCWS…HLQKYRLHTR (61 aa)) enclose the HTH myb-type domain. The H-T-H motif DNA-binding region spans 209 to 234 (PKQIREFMKVDGLTNDEVKSHLQKYR). Residues 269-291 (STGKTTGGATTSSTTTTTGIYGT) show a composition bias toward low complexity. A disordered region spans residues 269 to 322 (STGKTTGGATTSSTTTTTGIYGTMAAPPPPQWPSHSNYRPSIIVDEGSGSHSEG).

In terms of tissue distribution, expressed in the root hair region and root hair cells.

Its subcellular location is the nucleus. Its function is as follows. Transcription factor involved in nitrate and phosphate signaling in roots. Integrates nitrate and phosphate starvation responses and adaptation of root architecture depending on nutrient availabilities. Acts downstream of the nitrate sensor and transporter NPF6.3/NRT1.1. Represses primary root development in response to phosphate deficiency conditions, only when nitrate is present. Involved in the modulation of primary root and root hair growth in phosphate-deprived environment. May be required for suppressing abscisic acid (ABA) signaling in germinating embryo axis, which promotes the timely germination of seeds. This is Transcription factor HRS1 from Arabidopsis thaliana (Mouse-ear cress).